The primary structure comprises 397 residues: Efflux pump periplasmic linker BepD (397 aa).

The signal sequence occupies residues M1–A26. Residues A98–A139 are a coiled coil.

Belongs to the membrane fusion protein (MFP) (TC 8.A.1) family. Probably part of a tripartite efflux pump, which is composed of an outer membrane efflux protein, an inner membrane protein and a protein that expands the periplasmic space. Could form a tripartite pump with BepC and BepE.

The protein localises to the periplasm. Involved in resistance to several unrelated toxic compounds, such as dyes, detergents and antibiotics. This is Efflux pump periplasmic linker BepD (bepD) from Brucella suis biovar 1 (strain 1330).